The following is a 92-amino-acid chain: 10 kDa late embryogenesis abundant protein (92 aa).

The span at M1–R10 shows a compositional bias: polar residues. The interval M1–D92 is disordered. Composition is skewed to basic and acidic residues over residues K11–K26 and K38–K71.

The protein belongs to the small hydrophilic plant seed protein family. Maximally expressed in dry seeds. Also present in mid-maturation embryos.

Functionally, LEA proteins are late embryonic proteins abundant in higher plant seed embryos. They may play an essential role in seed survival and in controlling water exchanges during seed desiccation and imbibition. This chain is 10 kDa late embryogenesis abundant protein, found in Helianthus annuus (Common sunflower).